The primary structure comprises 244 residues: Transcriptional activator protein FnrA (244 aa).

The 74-residue stretch at 159–232 folds into the HTH crp-type domain; sequence KTADERIATF…GKEVRILDSI (74 aa). Positions 192 to 211 form a DNA-binding region, H-T-H motif; sequence RNEIGNYLGLAVETVSRVFT.

Its function is as follows. Transcriptional regulator of arginine deiminase. The polypeptide is Transcriptional activator protein FnrA (fnrA) (Stutzerimonas stutzeri (Pseudomonas stutzeri)).